The chain runs to 2560 residues: Plipastatin synthase subunit B (2560 aa).

Residues 7-310 (IQDIYPLSHM…NTVPVRIRSA (304 aa)) form a condensation 1 region. The interval 7-1042 (IQDIYPLSHM…AVKLMSLKEH (1036 aa)) is domain 1 (tyrosine-activating). Positions 496-889 (TYRQLQVRAN…QAPGVKEAAV (394 aa)) are adenylation 1. Positions 965–1040 (APRTLIEADL…SMAVKLMSLK (76 aa)) constitute a Carrier 1 domain. An O-(pantetheine 4'-phosphoryl)serine modification is found at Ser-1000. The condensation 2 stretch occupies residues 1052–1342 (QRDVYPLSFS…NTLAMRSKPE (291 aa)). The segment at 1052-2553 (QRDVYPLSFS…DLTLDELSEI (1502 aa)) is domain 2 (D-allo-threonine-activating). An adenylation 2 region spans residues 1527-1927 (TYRDLNEKAE…QYPMIKEAAV (401 aa)). The Carrier 2 domain maps to 2006 to 2080 (SPRNEIETVM…ELSARVRKDV (75 aa)). At Ser-2041 the chain carries O-(pantetheine 4'-phosphoryl)serine. An epimerization region spans residues 2088 to 2553 (VEGEITWTPI…DLTLDELSEI (466 aa)).

This sequence belongs to the ATP-dependent AMP-binding enzyme family. Pantetheine 4'-phosphate serves as cofactor.

Its function is as follows. This protein is a multifunctional enzyme, able to activate and polymerize the amino acids Tyr and Thr as part of the biosynthesis of the lipopeptide antibiotic plipastatin. The Thr residue is further converted to the D-allo-isomer form. The activation sites for these amino acids consist of individual domains. In Bacillus subtilis (strain 168), this protein is Plipastatin synthase subunit B (ppsB).